A 554-amino-acid polypeptide reads, in one-letter code: Neutral amino acid transporter 9 (554 aa).

The Cytoplasmic segment spans residues 1–112; that stretch reads MDSDQTPLIN…GSDGTGKNSS (112 aa). Residues 113–133 form a helical membrane-spanning segment; the sequence is IVTIFMIWNTMMGTSILSIPW. Residues 122 to 127 are important for arginine binding and amino acid transport; that stretch reads TMMGTS. Position 127 (Ser127) interacts with arginine. Residues 134 to 139 are Lumenal-facing; the sequence is GIKQAG. Residues 140-160 form a helical membrane-spanning segment; it reads FTTGVCILFLMGILTLYCCYR. Residues 161-191 are Cytoplasmic-facing; that stretch reads VVKSRGTIPLTDTSNWEFPDVCQYYFGSFGR. A helical membrane pass occupies residues 192–218; sequence WSSLLFSLVSLIGAMIVYWVLMSNFLF. At 219 to 276 the chain is on the lumenal side; sequence NTGKFIYNYVNDVNVTDDVLSNNGSDKVICPNPDSTRPLNKSMDTYFGNGTNYEQFET. N-linked (GlcNAc...) asparagine glycans are attached at residues Asn232, Asn241, Asn258, and Asn267. Cys248 and Cys417 are oxidised to a cystine. The helical transmembrane segment at 277-293 threads the bilayer; that stretch reads WWSKTNTVPFYLVVLLL. Residues 294–302 lie on the Cytoplasmic side of the membrane; the sequence is PLLSFRSPS. Residues 303–327 form a helical membrane-spanning segment; sequence FFAKFNILGTVSIIYLVSLVTLKAA. Over 328-349 the chain is Lumenal; that stretch reads HLGFHLRFSWNQVQEFFVPEFR. A helical transmembrane segment spans residues 350-370; it reads LSFPQLTGILTLAFFIHNCII. The Cytoplasmic portion of the chain corresponds to 371-387; that stretch reads TLLKNNRNQKNNVRDLS. A helical membrane pass occupies residues 388-408; that stretch reads IAYLLVGLTYIYVGVAVFASF. Residues 409–430 lie on the Lumenal side of the membrane; it reads PSPPLSKQCIQQNFLDNFPSSD. Residues 431–451 form a helical membrane-spanning segment; it reads ILAFVARIFLLFQMMTVYPLL. A CARC motif motif is present at residues 437–447; sequence RIFLLFQMMTV. A CRAC motif motif is present at residues 450–456; it reads LLGYLVR. Residues 452–472 are Cytoplasmic-facing; that stretch reads GYLVRVQLLGHIFGDIYPSVF. A helical transmembrane segment spans residues 473-493; the sequence is HVLALNIAVVGVGVIMARFYP. Residues 494–500 lie on the Lumenal side of the membrane; that stretch reads NIGGIIR. The chain crosses the membrane as a helical span at residues 501 to 521; the sequence is FSGAACGLAFVFVYPSLIHMI. The Cytoplasmic portion of the chain corresponds to 522–533; that stretch reads SLHRRGQLKVHS. The helical transmembrane segment at 534-554 threads the bilayer; that stretch reads ILIHVSIIVLGIANLIAQFFM.

Belongs to the amino acid/polyamine transporter 2 family. SLC38A9 subfamily. Associated component of the Ragulator complex. Associated component of the Rag GTPases heterodimers. In terms of processing, glycosylated.

Its subcellular location is the lysosome membrane. The protein localises to the late endosome membrane. The catalysed reaction is L-leucine(in) = L-leucine(out). It catalyses the reaction L-tyrosine(in) = L-tyrosine(out). The enzyme catalyses L-glutamine(out) = L-glutamine(in). It carries out the reaction L-asparagine(out) = L-asparagine(in). Lysosomal amino acid transporter involved in the activation of mTORC1 in response to amino acid levels. Probably acts as an amino acid sensor of the Rag GTPases and Ragulator complexes, 2 complexes involved in amino acid sensing and activation of mTORC1, a signaling complex promoting cell growth in response to growth factors, energy levels, and amino acids. Following activation by amino acids, the Ragulator and Rag GTPases function as a scaffold recruiting mTORC1 to lysosomes where it is in turn activated. SLC38A9 mediates transport of amino acids with low capacity and specificity with a slight preference for polar amino acids. Acts as an arginine sensor. Following activation by arginine binding, mediates transport of L-glutamine, leucine and tyrosine with high efficiency, and is required for the efficient utilization of these amino acids after lysosomal protein degradation. However, the transport mechanism is not well defined and the role of sodium is not clear. Guanine exchange factor (GEF) that, upon arginine binding, stimulates GDP release from RRAGA and therefore activates the Rag GTPase heterodimer and the mTORC1 pathway in response to nutrient sufficiency. The sequence is that of Neutral amino acid transporter 9 from Xenopus tropicalis (Western clawed frog).